We begin with the raw amino-acid sequence, 354 residues long: Acyl-CoA-binding domain-containing protein 2 (354 aa).

Residues 11 to 31 (VILGLIFSYLLAKLISIVVTF) traverse the membrane as a helical; Signal-anchor segment. The segment at 75-96 (AEQGSSRSDSVAGDDSEEDDDW) is disordered. Acidic residues predominate over residues 86–96 (AGDDSEEDDDW). One can recognise an ACB domain in the interval 104–194 (LDEAFSAATL…VTQLYPTWLD (91 aa)). An acyl-CoA contacts are provided by residues 136 to 140 (YGLYK), K162, and Y181. ANK repeat units follow at residues 265-294 (EGRT…DVNA) and 298-327 (EGQT…NTAA).

It belongs to the ACBP family. In terms of assembly, interacts (via ankyrin repeats) with HIPP26 and the ethylene-responsive element-binding proteins RAP2-3/EBP and RAP2-12. Interacts with CSE. As to expression, mostly expressed in roots and flowers, and, to a lower extent, in stems, pods and leaves (at protein level).

The protein localises to the cell membrane. Its subcellular location is the endoplasmic reticulum membrane. The protein resides in the peroxisome membrane. Binds medium- and long-chain acyl-CoA esters with very high affinity. Can interact in vitro with palmitoyl-CoA, but not with oleoyl-CoA. Binds to lead ions (Pb). May function as an intracellular carrier of acyl-CoA esters. Required for proper phospholipid and, to a lower extent, galactolipid composition. This is Acyl-CoA-binding domain-containing protein 2 (ACBP2) from Arabidopsis thaliana (Mouse-ear cress).